The primary structure comprises 526 residues: Calcium-dependent protein kinase 28 (526 aa).

The interval 1–37 is disordered; the sequence is MQPDPQPHGRGREKAAGAGPRLPPPVTAPSVGRPASV. Residues 49 to 307 enclose the Protein kinase domain; sequence YRIGKKLGQG…AHEVLCHPWI (259 aa). ATP-binding positions include 55 to 63 and Lys-78; that span reads LGQGQFGTT. Asp-173 (proton acceptor) is an active-site residue. The tract at residues 313–343 is autoinhibitory domain; sequence APDKPIDSAVLSRLKHFSAMNKLKKMALRVI. 4 EF-hand domains span residues 350-385, 386-421, 422-457, and 460-491; these read EEIG…VGSD, LMEP…MNKL, EREE…FGLS, and HLED…GNAG. Asp-363, Asp-365, Ser-367, Thr-369, Glu-374, Asp-399, Asp-401, Ser-403, Thr-405, Glu-410, Asp-435, Asp-437, Ser-439, Glu-446, Asp-469, Asn-471, Asp-473, Gln-475, and Glu-480 together coordinate Ca(2+).

It belongs to the protein kinase superfamily. Ser/Thr protein kinase family. CDPK subfamily.

It carries out the reaction L-seryl-[protein] + ATP = O-phospho-L-seryl-[protein] + ADP + H(+). The enzyme catalyses L-threonyl-[protein] + ATP = O-phospho-L-threonyl-[protein] + ADP + H(+). Activated by calcium. Autophosphorylation may play an important role in the regulation of the kinase activity. Functionally, may play a role in signal transduction pathways that involve calcium as a second messenger. In Oryza sativa subsp. japonica (Rice), this protein is Calcium-dependent protein kinase 28.